Consider the following 281-residue polypeptide: MSKYSDAKELAGLTLGKKTEYANQYDASLLQPVPRSLNRDDLELGDTLPFLGHDIWTLYELSWLNSKGLPQVAVGEVYIPATSANLIESKSFKLYLNSYNQTRFASWEEVAERLTQDLSACAGEKVLVEVNPVGHYTNQPIVTMEGECIDDQDIEINSYDFDADLLAGAAGEDQVEEVLHSHLLKSNCLITNQPDWGSVEIRYQGAKIDREKLLRYLVSFREHNEFHEQCVERIFTDLMKYCQPNKLTVFARYTRRGGLDINPYRSTEQDKPAHNHRMARQ.

Residue 87–89 participates in substrate binding; sequence IES. Residue 89-90 participates in NADPH binding; that stretch reads SK. Cysteine 188 acts as the Thioimide intermediate in catalysis. The active-site Proton donor is the aspartate 195. Position 227–228 (227–228) interacts with substrate; sequence HE. 256–257 is a binding site for NADPH; that stretch reads RG. The tract at residues 261–281 is disordered; the sequence is INPYRSTEQDKPAHNHRMARQ.

It belongs to the GTP cyclohydrolase I family. QueF type 2 subfamily. In terms of assembly, homodimer.

The protein resides in the cytoplasm. The catalysed reaction is 7-aminomethyl-7-carbaguanine + 2 NADP(+) = 7-cyano-7-deazaguanine + 2 NADPH + 3 H(+). Its pathway is tRNA modification; tRNA-queuosine biosynthesis. Its function is as follows. Catalyzes the NADPH-dependent reduction of 7-cyano-7-deazaguanine (preQ0) to 7-aminomethyl-7-deazaguanine (preQ1). The polypeptide is NADPH-dependent 7-cyano-7-deazaguanine reductase (Vibrio parahaemolyticus serotype O3:K6 (strain RIMD 2210633)).